A 475-amino-acid chain; its full sequence is MERQRSFSVKSTRVLAFIITIISSAIVFFTFFSSSLLKSNSSLYPTPEANFQIDLSPIAAISDSSVSPQASPILISTHFNSPENTSGSSKISVFEQKISGESLVKEVREIANLTSIKVIELPSNNGEDKKTEKRIEECDVTKGKWVYDSDYPLYTNASCPFIDEGFGCQSNGRLDLNYMNWRWEPQDCHAPRFNATKMLEMIRGKRLVFVGDSINRNQWESMLCLLFQAVKDPKRVYETHNRRITKEKGNYSFRFVDYKCTVEFYVTHFLVREGRARIGKKRRETLRIDAMDRTSSRWKGANILVFNTAHWWSHYKTKSGVNYYQEGDLIHPKLDVSTAFKKALQTWSSWVDKNVDPKKTRVFFRSAAPSHFSGGEWNSGGHCREANMPLNQTFKPSYSSKKSIVEDVLKQMRTPVTLLNVSGLSQYRIDAHPSIYGTKPENRRSRAVQDCSHWCLPGVPDTWNHFLYLHLLHKR.

A helical; Signal-anchor for type II membrane protein membrane pass occupies residues 14-34; the sequence is VLAFIITIISSAIVFFTFFSS. A GDS motif motif is present at residues 211-213; sequence GDS. Residues 450–464 carry the DCXHWCLPGXXDXWN motif motif; the sequence is DCSHWCLPGVPDTWN.

Belongs to the PC-esterase family. TBL subfamily.

It is found in the membrane. Its function is as follows. May act as a bridging protein that binds pectin and other cell wall polysaccharides. Probably involved in maintaining esterification of pectins. May be involved in the specific O-acetylation of cell wall polymers. This Arabidopsis thaliana (Mouse-ear cress) protein is Protein trichome birefringence-like 6 (TBL6).